The sequence spans 504 residues: Pre-mRNA-processing factor 19 (504 aa).

An N-acetylserine modification is found at S2. The 72-residue stretch at 2 to 73 (SLICSISNEV…KPPSATSIPA (72 aa)) folds into the U-box domain. The segment at 68 to 223 (ATSIPAILKA…VGLHSASIPG (156 aa)) is may mediate interaction with PSMC5. N6-acetyllysine is present on residues K122, K179, K244, and K261. A WD 1 repeat occupies 219-259 (ASIPGILALDLCPSDTNKILTGGADKNVVVFDKSTEQILAT). 6 WD repeats span residues 262–301 (GHTK…CVQV), 304–345 (AHES…TKVT), 348–387 (TSGC…NVAN), 390–429 (GHSG…NFKT), 433–472 (DNNF…LHFT), and 473–503 (EHSG…KFYS).

Belongs to the WD repeat PRP19 family. Homotetramer. Component of activated, catalytic and post-catalytic spliceosomes. Component of the Prp19 complex/PRP19C/Nineteen complex/NTC and related complexes described as PRP19-CDC5L splicing complex and PSO4 complex. A homotetramer of PRPF19, CDC5L, PLRG1 and BCAS2 constitute the core of those complexes. The interaction with CDC5L, PLRG1 and BCAS2 is direct within this core complex. At least three less stably associated proteins CTNNBL1, CWC15 and HSPA8 are found in the Prp19 complex. The Prp19 complex associates with the spliceosome during its assembly and remodeling recruiting additional proteins. Component of the XAB2 complex, a multimeric protein complex composed of XAB2, PRPF19, AQR, ZNF830, ISY1, and PPIE. Interacts with CWC22 and EIF4A3 in an RNA-independent manner. Interacts with RPA1 and RPA2; the PRP19-CDC5L complex is recruited to the sites of DNA repair where it interacts with the replication protein A complex (RPA). Interacts with SETMAR; required for SETMAR recruitment to site of DNA damage. Interacts with U2AF2; the interaction is direct and recruits the Prp19 complex to RNA polymerase II C-terminal domain (CTD) and the pre-mRNA. Interacts with PRPF3. Interacts with APEX1, DNTT and PSMB4. Interacts with KNSTRN. Interacts with PSMC5. Isoform 2 (via N-terminus) interacts with PPIA. Isoform 2 does not interact with CDC5L. Interacts with KHDC4. Interacts with USB1. Interacts with DDX41. In terms of tissue distribution, expressed in white and brown adipose tissues, brain and to a lower extent in liver, kidney, muscle, lung and spleen (at protein level).

It localises to the nucleus. The protein resides in the nucleoplasm. It is found in the cytoplasm. Its subcellular location is the cytoskeleton. The protein localises to the spindle. It localises to the lipid droplet. It carries out the reaction S-ubiquitinyl-[E2 ubiquitin-conjugating enzyme]-L-cysteine + [acceptor protein]-L-lysine = [E2 ubiquitin-conjugating enzyme]-L-cysteine + N(6)-ubiquitinyl-[acceptor protein]-L-lysine.. The protein operates within protein modification; protein ubiquitination. Functionally, ubiquitin-protein ligase which is a core component of several complexes mainly involved in pre-mRNA splicing and DNA repair. Required for pre-mRNA splicing as component of the spliceosome. Core component of the PRP19C/Prp19 complex/NTC/Nineteen complex which is part of the spliceosome and participates in its assembly, its remodeling and is required for its activity. During assembly of the spliceosome, mediates 'Lys-63'-linked polyubiquitination of the U4 spliceosomal protein PRPF3. Ubiquitination of PRPF3 allows its recognition by the U5 component PRPF8 and stabilizes the U4/U5/U6 tri-snRNP spliceosomal complex. Recruited to RNA polymerase II C-terminal domain (CTD) and the pre-mRNA, it may also couple the transcriptional and spliceosomal machineries. The XAB2 complex, which contains PRPF19, is also involved in pre-mRNA splicing, transcription and transcription-coupled repair. Beside its role in pre-mRNA splicing PRPF19, as part of the PRP19-CDC5L complex, plays a role in the DNA damage response/DDR. It is recruited to the sites of DNA damage by the RPA complex where PRPF19 directly ubiquitinates RPA1 and RPA2. 'Lys-63'-linked polyubiquitination of the RPA complex allows the recruitment of the ATR-ATRIP complex and the activation of ATR, a master regulator of the DNA damage response. May also play a role in DNA double-strand break (DSB) repair by recruiting the repair factor SETMAR to altered DNA. As part of the PSO4 complex may also be involved in the DNA interstrand cross-links/ICLs repair process. In addition, may also mediate 'Lys-48'-linked polyubiquitination of substrates and play a role in proteasomal degradation. May play a role in the biogenesis of lipid droplets. May play a role in neural differentiation possibly through its function as part of the spliceosome. In terms of biological role, forced expression leads to suppression of neuronal differentiation, and on the contrary to stimulation of astroglial cell differentiation in retinoic acid-primed P19 cells. This Mus musculus (Mouse) protein is Pre-mRNA-processing factor 19.